Here is a 49-residue protein sequence, read N- to C-terminus: Soritesidine (49 aa).

It localises to the secreted. In terms of biological role, very potent toxin that exhibits a wide range of toxicities over various organisms and cells including brine shrimp larvae (Artemia salina), sea hare eggs (Aplysia kurodai), mice, and cultured mammalian cells. An SOR-containing fraction cleaves plasmid DNA in a bivalent metal ion dependent manner suggesting genotoxicity of SOR. The chain is Soritesidine from Spongosorites sp. (strain QM G324170) (Okinawan marine Sponge).